The following is a 132-amino-acid chain: Fluoride-specific ion channel FluC (132 aa).

Helical transmembrane passes span 6–26 (VLQLIAVGFGGALGAMARFIV), 41–61 (GTLVVNSLGSFAIGLIMILMI), 73–93 (FLIVGFLGAFTTFSTFSFETY), and 104–124 (AMLNIGVSVLTGLFAVWLGIW). Residues glycine 80 and threonine 83 each contribute to the Na(+) site.

This sequence belongs to the fluoride channel Fluc/FEX (TC 1.A.43) family.

It is found in the cell inner membrane. It catalyses the reaction fluoride(in) = fluoride(out). With respect to regulation, na(+) is not transported, but it plays an essential structural role and its presence is essential for fluoride channel function. Functionally, fluoride-specific ion channel. Important for reducing fluoride concentration in the cell, thus reducing its toxicity. The polypeptide is Fluoride-specific ion channel FluC (Hydrogenovibrio crunogenus (strain DSM 25203 / XCL-2) (Thiomicrospira crunogena)).